The chain runs to 175 residues: Large ribosomal subunit protein uL10 (175 aa).

This sequence belongs to the universal ribosomal protein uL10 family. Part of the ribosomal stalk of the 50S ribosomal subunit. The N-terminus interacts with L11 and the large rRNA to form the base of the stalk. The C-terminus forms an elongated spine to which L12 dimers bind in a sequential fashion forming a multimeric L10(L12)X complex.

Functionally, forms part of the ribosomal stalk, playing a central role in the interaction of the ribosome with GTP-bound translation factors. This Methylobacterium sp. (strain 4-46) protein is Large ribosomal subunit protein uL10.